The chain runs to 451 residues: Alpha-galactosidase (451 aa).

Residue 5–71 participates in NAD(+) binding; the sequence is PKITFIGAGS…ASGKITCHTQ (67 aa). Asn-151 lines the substrate pocket. Mn(2+) is bound at residue Cys-173. Residue His-174 is the Proton donor of the active site. A Mn(2+)-binding site is contributed by His-203. Arg-287 is a binding site for substrate.

Belongs to the glycosyl hydrolase 4 family. Homodimer. The cofactor is NAD(+). Requires Mn(2+) as cofactor.

The enzyme catalyses Hydrolysis of terminal, non-reducing alpha-D-galactose residues in alpha-D-galactosides, including galactose oligosaccharides, galactomannans and galactolipids.. The polypeptide is Alpha-galactosidase (melA) (Escherichia coli (strain K12)).